A 481-amino-acid chain; its full sequence is Glutamyl-tRNA(Gln) amidotransferase subunit A (481 aa).

Residues lysine 76 and serine 151 each act as charge relay system in the active site. Serine 175 serves as the catalytic Acyl-ester intermediate.

It belongs to the amidase family. GatA subfamily. As to quaternary structure, heterotrimer of A, B and C subunits.

The enzyme catalyses L-glutamyl-tRNA(Gln) + L-glutamine + ATP + H2O = L-glutaminyl-tRNA(Gln) + L-glutamate + ADP + phosphate + H(+). Allows the formation of correctly charged Gln-tRNA(Gln) through the transamidation of misacylated Glu-tRNA(Gln) in organisms which lack glutaminyl-tRNA synthetase. The reaction takes place in the presence of glutamine and ATP through an activated gamma-phospho-Glu-tRNA(Gln). This Chlorobaculum parvum (strain DSM 263 / NCIMB 8327) (Chlorobium vibrioforme subsp. thiosulfatophilum) protein is Glutamyl-tRNA(Gln) amidotransferase subunit A.